The following is a 329-amino-acid chain: tRNA (guanine(10)-N2)-dimethyltransferase (329 aa).

Residues N40–E143 form the THUMP domain.

Belongs to the methyltransferase superfamily. Trm-G10 family. As to quaternary structure, monomer.

Its subcellular location is the cytoplasm. The enzyme catalyses guanosine(10) in tRNA + 2 S-adenosyl-L-methionine = N(2)-dimethylguanosine(10) in tRNA + 2 S-adenosyl-L-homocysteine + 2 H(+). Its function is as follows. Catalyzes the adenosylmethionine-dependent methylation of the exocyclic amino group (N(2)) of guanosine at position 10 of various tRNAs. Acts via a two-step process that leads to the formation of either N(2)-monomethyl (m(2)G) or N(2)-dimethylguanosine (m(2)(2)G). This chain is tRNA (guanine(10)-N2)-dimethyltransferase (trmG10), found in Pyrococcus abyssi (strain GE5 / Orsay).